The sequence spans 184 residues: Fanconi anemia core complex-associated protein 20 (184 aa).

Disordered regions lie at residues 1–30 (MEEE…PWFL) and 46–81 (TVGG…TVPP). Residues 7–16 (LRGRLSRRRP) show a composition bias toward basic residues. Polar residues predominate over residues 47–57 (VGGNTDWTPNS). Residue Ser119 is modified to Phosphoserine. Residues 148 to 184 (LLNCPLCQKAFDPKLTQLDVDSHLAQCLAESTEDVVW) form a UBZ2-type zinc finger. Zn(2+)-binding residues include Cys151, Cys154, His170, and Cys174.

As to quaternary structure, component of the Fanconi anemia (FA) complex. Interacts with FANCA; interaction is direct. Interacts with REV1.

It localises to the nucleus. It is found in the chromosome. Functionally, component of the Fanconi anemia (FA) complex required to recruit the FA complex to DNA interstrand cross-links (ICLs) and promote ICLs repair. Following DNA damage recognizes and binds 'Lys-63'-linked ubiquitin generated by RNF8 at ICLs and recruits other components of the FA complex. Promotes translesion synthesis via interaction with REV1. The protein is Fanconi anemia core complex-associated protein 20 of Rattus norvegicus (Rat).